The following is a 129-amino-acid chain: Small ribosomal subunit protein uS11 (129 aa).

This sequence belongs to the universal ribosomal protein uS11 family. In terms of assembly, part of the 30S ribosomal subunit. Interacts with proteins S7 and S18. Binds to IF-3.

In terms of biological role, located on the platform of the 30S subunit, it bridges several disparate RNA helices of the 16S rRNA. Forms part of the Shine-Dalgarno cleft in the 70S ribosome. This is Small ribosomal subunit protein uS11 from Ectopseudomonas mendocina (strain ymp) (Pseudomonas mendocina).